The following is a 400-amino-acid chain: MKLKTLSVGEVNNYVKKLVENDFILKNLNVKGEISNLKFHSSGHIYFSLKDENSKVNCIMFKNNAVNLDFRLEEGMKVEIKARLGVYHKEGTYQLYCENIKKAGIGELFEEFHKLKKELSEEGIFDEKYKRALPKFPKRIGIITAKTGAAVRDIINVIQRRNKSLDIILYPAKVQGENAADSIIEGIRYFNNEKSVDVIILGRGGGFIEELWAFNNRDLAYEIFNSRIPTVSAVGHEVDFTISDFVSDMRAPTPSAAGELVSPSLQEMINDLLNKKEFLHRAIDRKFLNAKRDVDLLYKGLKGNNPKDIIEKRIKEVNSLEEKLNFLGKRKIDKAKDELIALNSILQTLNPLNTLGRGYSVIMDKEDKVINNVSELKKNDMVKVIMKDGSVNIDIKIINE.

Belongs to the XseA family. Heterooligomer composed of large and small subunits.

It localises to the cytoplasm. The catalysed reaction is Exonucleolytic cleavage in either 5'- to 3'- or 3'- to 5'-direction to yield nucleoside 5'-phosphates.. Functionally, bidirectionally degrades single-stranded DNA into large acid-insoluble oligonucleotides, which are then degraded further into small acid-soluble oligonucleotides. The sequence is that of Exodeoxyribonuclease 7 large subunit from Clostridium perfringens (strain SM101 / Type A).